Consider the following 503-residue polypeptide: ATP synthase subunit alpha (503 aa).

Residue 170–177 coordinates ATP; the sequence is GDRQTGKT.

F-type ATPases have 2 components, CF(1) - the catalytic core - and CF(0) - the membrane proton channel. CF(1) has five subunits: alpha(3), beta(3), gamma(1), delta(1), epsilon(1). CF(0) has four main subunits: a(1), b(1), b'(1) and c(9-12).

The protein localises to the cellular thylakoid membrane. The catalysed reaction is ATP + H2O + 4 H(+)(in) = ADP + phosphate + 5 H(+)(out). Its activity is regulated as follows. Inhibited by dicyclohexylcarbodiimide. Produces ATP from ADP in the presence of a proton gradient across the membrane. The alpha chain is a regulatory subunit. Its function is as follows. The complex from the organism is particularly stable to disruption and remains functional after 6 hrs at 55 degrees Celsius. In Thermosynechococcus vestitus (strain NIES-2133 / IAM M-273 / BP-1), this protein is ATP synthase subunit alpha.